Consider the following 663-residue polypeptide: MKDLFKIYSNYQPAGDQPTAIASLIDGLESGLAKQTLLGVTGSGKTFTIAHVIQAMKRPTLIMAPNKTLAAQLYGEFKAFFPDNAVEYFVSYYDYYQPEAYVPASDTFIEKDASINEHIEQMRLSATKALIERKDAIIVATVSAIYGLGDPDSYLRMLLHLSRGEQSDQRKILKRLAEMQYTRTNLSLERGQFRVHGDVIDIFPADSEKEAIRIELFDDEVDNIARFDPLTGEILQRLPRVTIFPKTHYVTPRERILETVEKVKAELQERLAELNAQNKLVEAQRLEQRTCFDIEMMLELGYCSGIENYSRYLSNREAGEAPPTLFDYLPPDALLIIDESHVTVPQIGGMYRGDRARKETLVNYGFRLPSALDNRPLRFEEFEERSPQTIYISATPGPYEQEHSDNVAEQVVRPTGLIDPEVEIRPVKTQVDDLMSEIRQVIAQGSRILVTTLTKRMAEDLTEYLSEHGIKVRYLHSDVDTVERMEIIRDLRLGEFDVLVGINLLREGLDMPEVALVAILDADKEGFLRSERSLIQTIGRAARNVKGRAILYADTMTGSMQRALMETERRREKQKAFNLKHGITPKGINKSVEDILEGAYIGKRKTMVAEQAPRYTHWSPQELAKQINALEKQMYAHAQNMEFELAAKIRDEYLLLKEQLMKI.

Residues 26–183 (DGLESGLAKQ…KRLAEMQYTR (158 aa)) enclose the Helicase ATP-binding domain. Residue 39-46 (GVTGSGKT) participates in ATP binding. A Beta-hairpin motif is present at residues 92–115 (YYDYYQPEAYVPASDTFIEKDASI). In terms of domain architecture, Helicase C-terminal spans 430 to 596 (QVDDLMSEIR…GINKSVEDIL (167 aa)). The UVR domain maps to 624-659 (AKQINALEKQMYAHAQNMEFELAAKIRDEYLLLKEQ).

It belongs to the UvrB family. Forms a heterotetramer with UvrA during the search for lesions. Interacts with UvrC in an incision complex.

Its subcellular location is the cytoplasm. Its function is as follows. The UvrABC repair system catalyzes the recognition and processing of DNA lesions. A damage recognition complex composed of 2 UvrA and 2 UvrB subunits scans DNA for abnormalities. Upon binding of the UvrA(2)B(2) complex to a putative damaged site, the DNA wraps around one UvrB monomer. DNA wrap is dependent on ATP binding by UvrB and probably causes local melting of the DNA helix, facilitating insertion of UvrB beta-hairpin between the DNA strands. Then UvrB probes one DNA strand for the presence of a lesion. If a lesion is found the UvrA subunits dissociate and the UvrB-DNA preincision complex is formed. This complex is subsequently bound by UvrC and the second UvrB is released. If no lesion is found, the DNA wraps around the other UvrB subunit that will check the other stand for damage. The sequence is that of UvrABC system protein B from Legionella pneumophila (strain Corby).